A 166-amino-acid chain; its full sequence is Cofilin-2 (166 aa).

Ala2 carries the post-translational modification N-acetylalanine. Ser3 is subject to Phosphoserine. In terms of domain architecture, ADF-H spans 4 to 153; that stretch reads GVTVNDEVIK…KDRSTLGEKL (150 aa). The residue at position 6 (Thr6) is a Phosphothreonine. Positions 30-34 match the Nuclear localization signal motif; that stretch reads KKRKK.

This sequence belongs to the actin-binding proteins ADF family. In terms of assembly, interacts with CSRP3; possibly two molecules of CFL2 can interact with one molecule if CSRP3. In terms of processing, the phosphorylation of Ser-24 may prevent recognition of the nuclear localization signal. As to expression, predominantly expressed in skeletal muscle.

It is found in the nucleus matrix. Its subcellular location is the cytoplasm. It localises to the cytoskeleton. In terms of biological role, controls reversibly actin polymerization and depolymerization in a pH-sensitive manner. It has the ability to bind G- and F-actin in a 1:1 ratio of cofilin to actin. It is the major component of intranuclear and cytoplasmic actin rods. Required for muscle maintenance. May play a role during the exchange of alpha-actin forms during the early postnatal remodeling of the sarcomere. This Mus musculus (Mouse) protein is Cofilin-2 (Cfl2).